Reading from the N-terminus, the 692-residue chain is Elongation factor G (692 aa).

In terms of domain architecture, tr-type G spans 8-282; that stretch reads AKTRNIGIMA…AVIAYLPSPL (275 aa). Residues 17–24, 81–85, and 135–138 each bind GTP; these read AHVDAGKT, DTPGH, and NKMD.

It belongs to the TRAFAC class translation factor GTPase superfamily. Classic translation factor GTPase family. EF-G/EF-2 subfamily.

It is found in the cytoplasm. Functionally, catalyzes the GTP-dependent ribosomal translocation step during translation elongation. During this step, the ribosome changes from the pre-translocational (PRE) to the post-translocational (POST) state as the newly formed A-site-bound peptidyl-tRNA and P-site-bound deacylated tRNA move to the P and E sites, respectively. Catalyzes the coordinated movement of the two tRNA molecules, the mRNA and conformational changes in the ribosome. The sequence is that of Elongation factor G (fus) from Streptococcus pyogenes serotype M1.